A 93-amino-acid polypeptide reads, in one-letter code: uncharacterized protein (93 aa).

This is an uncharacterized protein from Methanocaldococcus jannaschii (strain ATCC 43067 / DSM 2661 / JAL-1 / JCM 10045 / NBRC 100440) (Methanococcus jannaschii).